The following is a 127-amino-acid chain: Large ribosomal subunit protein bL20 (127 aa).

The protein belongs to the bacterial ribosomal protein bL20 family.

Functionally, binds directly to 23S ribosomal RNA and is necessary for the in vitro assembly process of the 50S ribosomal subunit. It is not involved in the protein synthesizing functions of that subunit. The polypeptide is Large ribosomal subunit protein bL20 (Akkermansia muciniphila (strain ATCC BAA-835 / DSM 22959 / JCM 33894 / BCRC 81048 / CCUG 64013 / CIP 107961 / Muc)).